A 465-amino-acid polypeptide reads, in one-letter code: ATP synthase subunit beta (465 aa).

An ATP-binding site is contributed by G148–T155.

It belongs to the ATPase alpha/beta chains family. In terms of assembly, F-type ATPases have 2 components, CF(1) - the catalytic core - and CF(0) - the membrane proton channel. CF(1) has five subunits: alpha(3), beta(3), gamma(1), delta(1), epsilon(1). CF(0) has three main subunits: a(1), b(2) and c(9-12). The alpha and beta chains form an alternating ring which encloses part of the gamma chain. CF(1) is attached to CF(0) by a central stalk formed by the gamma and epsilon chains, while a peripheral stalk is formed by the delta and b chains.

It is found in the cell inner membrane. The enzyme catalyses ATP + H2O + 4 H(+)(in) = ADP + phosphate + 5 H(+)(out). In terms of biological role, produces ATP from ADP in the presence of a proton gradient across the membrane. The catalytic sites are hosted primarily by the beta subunits. In Chromobacterium violaceum (strain ATCC 12472 / DSM 30191 / JCM 1249 / CCUG 213 / NBRC 12614 / NCIMB 9131 / NCTC 9757 / MK), this protein is ATP synthase subunit beta.